The primary structure comprises 296 residues: MPSMTDTTRSLRDCLAPAKLNLFLHITGRRPDGYHALQSVFQLLDWGDRLHFTLRDDGKVSRVTDVPGVPEESDLVVRAASLLKAHAGATLGVDIEIDKRLPMGAGLGGGSSDAATTLLALNRLWRLDLPRTTLQSLAVKLGADVPFFVFGKNAFAEGIGEALQAVELPARWFLVVTPRVHVPTAAIFSEKSLTRDSKPITITDFLAQRGIDAGWPDSFGRNDMQPVVTSKYAEVAKVVEWFYNLTPARMTGSGASVFAAFKSKADAEAAQAKLPAGWNSAVAESMSEHPLFAFAS.

The active site involves Lys-19. Residue 102–112 coordinates ATP; that stretch reads PMGAGLGGGSS. The active site involves Asp-144.

It belongs to the GHMP kinase family. IspE subfamily.

It carries out the reaction 4-CDP-2-C-methyl-D-erythritol + ATP = 4-CDP-2-C-methyl-D-erythritol 2-phosphate + ADP + H(+). Its pathway is isoprenoid biosynthesis; isopentenyl diphosphate biosynthesis via DXP pathway; isopentenyl diphosphate from 1-deoxy-D-xylulose 5-phosphate: step 3/6. Catalyzes the phosphorylation of the position 2 hydroxy group of 4-diphosphocytidyl-2C-methyl-D-erythritol. This is 4-diphosphocytidyl-2-C-methyl-D-erythritol kinase from Burkholderia pseudomallei (strain 1710b).